A 180-amino-acid polypeptide reads, in one-letter code: Formate hydrogenlyase subunit 6 (180 aa).

4Fe-4S ferredoxin-type domains are found at residues 31–60 (GKPEQNPQQCIGCAACVNACPSNALTVETD) and 66–95 (LAWEFNLGHCIFCGRCEEVCPTAAIKLSQE). 8 residues coordinate [4Fe-4S] cluster: cysteine 40, cysteine 43, cysteine 46, cysteine 50, cysteine 75, cysteine 78, cysteine 81, and cysteine 85.

FHL comprises of a formate dehydrogenase, unidentified electron carriers and a hydrogenase (isoenzyme 3). In this non-energy conserving pathway, molecular hydrogen and carbodioxide are released from formate.

Functionally, probable electron transfer protein for hydrogenase 3. The protein is Formate hydrogenlyase subunit 6 (hycF) of Escherichia coli (strain K12).